Consider the following 427-residue polypeptide: Histidine--tRNA ligase (427 aa).

This sequence belongs to the class-II aminoacyl-tRNA synthetase family. In terms of assembly, homodimer.

The protein localises to the cytoplasm. The catalysed reaction is tRNA(His) + L-histidine + ATP = L-histidyl-tRNA(His) + AMP + diphosphate + H(+). In Lacticaseibacillus casei (strain BL23) (Lactobacillus casei), this protein is Histidine--tRNA ligase.